The chain runs to 406 residues: Serine/threonine transporter SstT (406 aa).

The next 9 membrane-spanning stretches (helical) occupy residues 15-35 (LVIQ…VSPS), 47-67 (FVGA…AASI), 81-101 (IIVM…VLSF), 140-160 (ALMS…GLAL), 191-211 (FGIF…ALAG), 215-235 (LLVV…PAMV), 289-309 (IPLG…TLTL), 315-335 (MGIE…AVSA), and 362-382 (IAMQ…SAET).

Belongs to the dicarboxylate/amino acid:cation symporter (DAACS) (TC 2.A.23) family.

It localises to the cell inner membrane. It catalyses the reaction L-serine(in) + Na(+)(in) = L-serine(out) + Na(+)(out). It carries out the reaction L-threonine(in) + Na(+)(in) = L-threonine(out) + Na(+)(out). Its function is as follows. Involved in the import of serine and threonine into the cell, with the concomitant import of sodium (symport system). The chain is Serine/threonine transporter SstT from Vibrio vulnificus (strain YJ016).